The sequence spans 59 residues: Large ribosomal subunit protein bL32 (59 aa).

This sequence belongs to the bacterial ribosomal protein bL32 family.

The chain is Large ribosomal subunit protein bL32 from Anaeromyxobacter dehalogenans (strain 2CP-C).